Reading from the N-terminus, the 307-residue chain is Mitogen-activated protein kinase kinase 7 (307 aa).

Residues 45-303 (VEKLHVLGRG…ASQLLGHPFL (259 aa)) form the Protein kinase domain. Residues 51–59 (LGRGSSGIV) and Lys-74 each bind ATP. Residue Asp-165 is the Proton acceptor of the active site. 2 positions are modified to phosphoserine: Ser-193 and Ser-199. Thr-203 carries the phosphothreonine modification.

It belongs to the protein kinase superfamily. STE Ser/Thr protein kinase family. MAP kinase kinase subfamily. In terms of assembly, interacts with MPK15. In terms of processing, phosphorylation at Ser-193 and Ser-199 by MAP kinase kinase kinases positively regulates kinase activity. In terms of tissue distribution, expressed in all tissues, with a relatively higher level in leaves and lower level in roots and flowers.

It catalyses the reaction L-seryl-[protein] + ATP = O-phospho-L-seryl-[protein] + ADP + H(+). The catalysed reaction is L-threonyl-[protein] + ATP = O-phospho-L-threonyl-[protein] + ADP + H(+). The enzyme catalyses L-tyrosyl-[protein] + ATP = O-phospho-L-tyrosyl-[protein] + ADP + H(+). In terms of biological role, may function as a negative regulator of polar auxin transport. Positively regulates plant basal and systemic acquired resistance (SAR). Activates MPK3 and MPK6 in vitro. In Arabidopsis thaliana (Mouse-ear cress), this protein is Mitogen-activated protein kinase kinase 7 (MKK7).